The following is a 318-amino-acid chain: NADH-ubiquinone oxidoreductase chain 1 (318 aa).

The next 8 membrane-spanning stretches (helical) occupy residues 2–22 (FMLN…FLTL), 68–88 (ITMF…MWIP), 100–120 (LGVL…LWSG), 147–167 (AIIL…TLII), 171–191 (YIWL…STLA), 217–237 (GGPF…MNAL), 254–273 (LYTT…FLWI), and 294–314 (LPLT…MAGI).

Belongs to the complex I subunit 1 family.

It is found in the mitochondrion inner membrane. The catalysed reaction is a ubiquinone + NADH + 5 H(+)(in) = a ubiquinol + NAD(+) + 4 H(+)(out). Core subunit of the mitochondrial membrane respiratory chain NADH dehydrogenase (Complex I) that is believed to belong to the minimal assembly required for catalysis. Complex I functions in the transfer of electrons from NADH to the respiratory chain. The immediate electron acceptor for the enzyme is believed to be ubiquinone. This is NADH-ubiquinone oxidoreductase chain 1 (MT-ND1) from Hsunycteris thomasi (Thomas's nectar bat).